A 300-amino-acid chain; its full sequence is Ribosomal protein L11 methyltransferase (300 aa).

The S-adenosyl-L-methionine site is built by Thr152, Gly173, Asp195, and Asn234.

This sequence belongs to the methyltransferase superfamily. PrmA family.

The protein localises to the cytoplasm. The catalysed reaction is L-lysyl-[protein] + 3 S-adenosyl-L-methionine = N(6),N(6),N(6)-trimethyl-L-lysyl-[protein] + 3 S-adenosyl-L-homocysteine + 3 H(+). Its function is as follows. Methylates ribosomal protein L11. The chain is Ribosomal protein L11 methyltransferase from Burkholderia ambifaria (strain MC40-6).